Reading from the N-terminus, the 1302-residue chain is DNA-directed RNA polymerase subunit beta (1302 aa).

The protein belongs to the RNA polymerase beta chain family. In terms of assembly, the RNAP catalytic core consists of 2 alpha, 1 beta, 1 beta' and 1 omega subunit. When a sigma factor is associated with the core the holoenzyme is formed, which can initiate transcription.

It carries out the reaction RNA(n) + a ribonucleoside 5'-triphosphate = RNA(n+1) + diphosphate. Its function is as follows. DNA-dependent RNA polymerase catalyzes the transcription of DNA into RNA using the four ribonucleoside triphosphates as substrates. This chain is DNA-directed RNA polymerase subunit beta, found in Spiroplasma citri.